We begin with the raw amino-acid sequence, 431 residues long: UDP-N-acetylmuramate--L-alanine ligase (431 aa).

108-114 (GAHGKST) is a binding site for ATP.

This sequence belongs to the MurCDEF family.

Its subcellular location is the cytoplasm. The catalysed reaction is UDP-N-acetyl-alpha-D-muramate + L-alanine + ATP = UDP-N-acetyl-alpha-D-muramoyl-L-alanine + ADP + phosphate + H(+). The protein operates within cell wall biogenesis; peptidoglycan biosynthesis. Its function is as follows. Cell wall formation. The polypeptide is UDP-N-acetylmuramate--L-alanine ligase (Campylobacter jejuni subsp. doylei (strain ATCC BAA-1458 / RM4099 / 269.97)).